The chain runs to 475 residues: Protein translocase subunit SecD (475 aa).

A run of 6 helical transmembrane segments spans residues 7-27 (LLIT…SLKF), 313-333 (KGFM…FIYY), 338-358 (LIAD…MAYL), 364-384 (LPGV…NVLI), 410-430 (FWTI…LFQF), and 437-457 (GFAV…VTVT).

The protein belongs to the SecD/SecF family. SecD subfamily. As to quaternary structure, forms a complex with SecF. Part of the essential Sec protein translocation apparatus which comprises SecA, SecYEG and auxiliary proteins SecDF. Other proteins may also be involved.

It is found in the cell inner membrane. In terms of biological role, part of the Sec protein translocase complex. Interacts with the SecYEG preprotein conducting channel. SecDF uses the proton motive force (PMF) to complete protein translocation after the ATP-dependent function of SecA. The polypeptide is Protein translocase subunit SecD (Endomicrobium trichonymphae).